The following is a 512-amino-acid chain: Kelch repeat protein C2 (512 aa).

In terms of domain architecture, BTB spans 2–67 (ESVIFSINGE…MRWKKINITI (66 aa)). In terms of domain architecture, BACK spans 102–176 (CIRMFNFSKR…LLKWIHKNPN (75 aa)). Kelch repeat units follow at residues 216–261 (IKHN…LHNC), 262–307 (LYII…VNNG), 309–354 (LYVI…FVND), 356–403 (IYVM…EYDG), 405–449 (IYVI…SCGD), and 452–498 (LIIA…THKS).

This sequence belongs to the poxviruses Kelch family.

The chain is Kelch repeat protein C2 from Rabbitpox virus (strain Utrecht) (RPV).